Here is a 76-residue protein sequence, read N- to C-terminus: Conotoxin Am6.3 (76 aa).

Positions M1–A22 are cleaved as a signal peptide. Cystine bridges form between C52–C67, C59–C71, and C66–C75.

Belongs to the conotoxin O1 superfamily. Is not hydroxylated. Expressed by the venom duct.

The protein resides in the secreted. In terms of biological role, probable toxin that inhibits ion channels. The protein is Conotoxin Am6.3 of Conus amadis (Amadis cone).